A 457-amino-acid polypeptide reads, in one-letter code: Protein PIN-LIKES 2 (457 aa).

The Lumenal portion of the chain corresponds to 1 to 15 (MSGFSSGNVNSRVVD). Residues 16–36 (ILSGVVPLLKLICLTVIGLLL) traverse the membrane as a helical segment. Residues 37–54 (AHPKTQLVPRATFRLLSK) lie on the Cytoplasmic side of the membrane. A helical membrane pass occupies residues 55–75 (LVFALFLPCLIFTELGESITL). The Lumenal portion of the chain corresponds to 76–85 (DNIVQWWFIP). A helical membrane pass occupies residues 86-106 (VNVLLSAVVGSLIGYLVVLIC). Over 107–116 (RPPPEFNRFT) the chain is Cytoplasmic. A helical membrane pass occupies residues 117 to 137 (IVMTAFGNTGNLLLAIVSSVC). At 138 to 151 (HTKTNPFGPNCNSR) the chain is on the lumenal side. A helical transmembrane segment spans residues 152 to 172 (GVSYVSFAQWVAVILVYTVVY). The Cytoplasmic segment spans residues 173–291 (HMMEPPLEYY…PVKHILQPPT (119 aa)). The chain crosses the membrane as a helical span at residues 292-312 (IASLLAIIIGSVPQLKSVVFG). At 313–322 (YDAPLSFITD) the chain is on the lumenal side. The helical transmembrane segment at 323-343 (SLNIMGSAMVPSVMLVLGGML) threads the bilayer. Residues 344–356 (SEGPNESTLGLRT) are Cytoplasmic-facing. The helical transmembrane segment at 357–377 (TIGISVARLLVLPLVGIGIVM) threads the bilayer. Residues 378 to 393 (SADKLGLISSADPMFK) are Lumenal-facing. A helical transmembrane segment spans residues 394 to 414 (FVLLLQYSTPSAILLGAIASL). The Cytoplasmic segment spans residues 415–424 (RGYAVREASA). Residues 425 to 445 (LLFWQHIFALLSLTFYIVIFF) form a helical membrane-spanning segment. Residues 446 to 457 (KLTVETTVQGMQ) are Lumenal-facing.

Belongs to the auxin efflux carrier (TC 2.A.69.2) family. As to expression, expressed in seedlings, rosette and cauline leaves, flowers and siliques.

Its subcellular location is the endoplasmic reticulum membrane. In terms of biological role, involved in cellular auxin homeostasis by regulating auxin metabolism. Regulates intracellular auxin accumulation at the endoplasmic reticulum and thus auxin availability for nuclear auxin signaling. In Arabidopsis thaliana (Mouse-ear cress), this protein is Protein PIN-LIKES 2.